Here is a 205-residue protein sequence, read N- to C-terminus: Proteasome subunit beta (205 aa).

Positions Met1–Gly8 are cleaved as a propeptide — removed in mature form; by autocatalysis. Residue Thr9 is the Nucleophile of the active site.

Belongs to the peptidase T1B family. The 20S proteasome core is composed of 14 alpha and 14 beta subunits that assemble into four stacked heptameric rings, resulting in a barrel-shaped structure. The two inner rings, each composed of seven catalytic beta subunits, are sandwiched by two outer rings, each composed of seven alpha subunits. The catalytic chamber with the active sites is on the inside of the barrel. Has a gated structure, the ends of the cylinder being occluded by the N-termini of the alpha-subunits. Is capped at one or both ends by the proteasome regulatory ATPase, PAN.

The protein localises to the cytoplasm. It catalyses the reaction Cleavage of peptide bonds with very broad specificity.. With respect to regulation, the formation of the proteasomal ATPase PAN-20S proteasome complex, via the docking of the C-termini of PAN into the intersubunit pockets in the alpha-rings, triggers opening of the gate for substrate entry. Interconversion between the open-gate and close-gate conformations leads to a dynamic regulation of the 20S proteasome proteolysis activity. Functionally, component of the proteasome core, a large protease complex with broad specificity involved in protein degradation. This chain is Proteasome subunit beta, found in Methanocella paludicola (strain DSM 17711 / JCM 13418 / NBRC 101707 / SANAE).